The primary structure comprises 106 residues: Large ribosomal subunit protein eL42 (106 aa).

Residues 1–29 (MVNIPKTRRTYCKGKACRKHTPHKVTQYK) are compositionally biased toward basic residues. The segment at 1-56 (MVNIPKTRRTYCKGKACRKHTPHKVTQYKKGKDSLSAQGKRRYDRKQSGYGGQTKP) is disordered.

This sequence belongs to the eukaryotic ribosomal protein eL42 family.

This Cryptococcus neoformans var. neoformans serotype D (strain B-3501A) (Filobasidiella neoformans) protein is Large ribosomal subunit protein eL42 (RPL44).